A 249-amino-acid chain; its full sequence is uncharacterized protein (249 aa).

It is found in the cytoplasm. Its subcellular location is the nucleus. This is an uncharacterized protein from Schizosaccharomyces pombe (strain 972 / ATCC 24843) (Fission yeast).